We begin with the raw amino-acid sequence, 431 residues long: 5-methylthioadenosine/S-adenosylhomocysteine deaminase (431 aa).

Residues H60 and H62 each coordinate Zn(2+). Substrate is bound by residues E89 and H182. Residue H209 participates in Zn(2+) binding. Substrate contacts are provided by E212 and D297. A Zn(2+)-binding site is contributed by D297.

It belongs to the metallo-dependent hydrolases superfamily. MTA/SAH deaminase family. The cofactor is Zn(2+).

The enzyme catalyses S-adenosyl-L-homocysteine + H2O + H(+) = S-inosyl-L-homocysteine + NH4(+). It catalyses the reaction S-methyl-5'-thioadenosine + H2O + H(+) = S-methyl-5'-thioinosine + NH4(+). Catalyzes the deamination of 5-methylthioadenosine and S-adenosyl-L-homocysteine into 5-methylthioinosine and S-inosyl-L-homocysteine, respectively. Is also able to deaminate adenosine. This is 5-methylthioadenosine/S-adenosylhomocysteine deaminase from Natronomonas pharaonis (strain ATCC 35678 / DSM 2160 / CIP 103997 / JCM 8858 / NBRC 14720 / NCIMB 2260 / Gabara) (Halobacterium pharaonis).